The primary structure comprises 75 residues: Large ribosomal subunit protein bL31 (75 aa).

Residues Cys16, Cys18, Cys37, and Cys40 each contribute to the Zn(2+) site.

The protein belongs to the bacterial ribosomal protein bL31 family. Type A subfamily. In terms of assembly, part of the 50S ribosomal subunit. The cofactor is Zn(2+).

Binds the 23S rRNA. In Nitrosospira multiformis (strain ATCC 25196 / NCIMB 11849 / C 71), this protein is Large ribosomal subunit protein bL31.